The primary structure comprises 297 residues: Thoeris protein ThsA (297 aa).

Transmembrane regions (helical) follow at residues 32-52 (ALSI…FLDL) and 57-77 (RLII…VQFI).

It is found in the cell membrane. Its activity is regulated as follows. Activated by a signal molecule generated by ThsB. Functionally, probable membrane protein component of the Thoeris antiviral defense system, composed of ThsA and ThsB. Expression of ThsA and ThsB in B.subtilis (strain BEST7003) confers resistance to phages SBSphiC, SBSphiJ and SPO1. Activation by a signal generated by ThsB leads to phage resistance. In Bacillus amyloliquefaciens (strain Y2) (Bacillus amyloliquefaciens subsp. plantarum (strain B9601-Y2)), this protein is Thoeris protein ThsA.